Reading from the N-terminus, the 179-residue chain is MASSMCGMFPGQQPPGSLPPPGPGGPGQPGLLTGTPGNRGANNTLVDELEASFEACFASLVSQDYVNGTDQEEIRTGVDQCIQKFLDVARQTECFFLQKRLQLSVQKPEQVEKEDASELKNELQRKEMLIQKHLAKIHHWQQVLEDINVQHKKPTELPQGPLAFLEQASANLPAPMKPN.

A disordered region spans residues 1–43 (MASSMCGMFPGQQPPGSLPPPGPGGPGQPGLLTGTPGNRGANN). Pro residues predominate over residues 12–26 (QQPPGSLPPPGPGGP). A coiled-coil region spans residues 109–139 (EQVEKEDASELKNELQRKEMLIQKHLAKIHH).

Belongs to the Mediator complex subunit 28 family. As to quaternary structure, component of the Mediator complex.

The protein localises to the nucleus. Its function is as follows. Component of the Mediator complex, a coactivator involved in the regulated transcription of nearly all RNA polymerase II-dependent genes. Mediator functions as a bridge to convey information from gene-specific regulatory proteins to the basal RNA polymerase II transcription machinery. Mediator is recruited to promoters by direct interactions with regulatory proteins and serves as a scaffold for the assembly of a functional preinitiation complex with RNA polymerase II and the general transcription factors. This chain is Mediator of RNA polymerase II transcription subunit 28 (med28), found in Danio rerio (Zebrafish).